The following is a 411-amino-acid chain: Basic leucine zipper 10 (411 aa).

Disordered stretches follow at residues 1-36, 76-99, 140-251, and 362-411; these read MNSI…DEVS, SLPS…DSGN, SVKP…NDLK, and NNFA…KCVD. Over residues 24–36 the composition is skewed to polar residues; it reads PDSSKPVTADEVS. Basic and acidic residues predominate over residues 89–98; that stretch reads DSRFRDRDSG. Polar residues-rich tracts occupy residues 146–173 and 183–193; these read STSS…TSSL and SMKQVTSGSSR. Ser-196 bears the Phosphoserine mark. Positions 196–206 are enriched in acidic residues; it reads SDDEDLDEENE. The bZIP domain occupies 215 to 278; that stretch reads DVKKSRRMLS…DEAAVGNRIL (64 aa). The basic motif stretch occupies residues 217–236; sequence KKSRRMLSNRESARRSRRRK. The short motif at 219–226 is the Nuclear localization signal element; the sequence is SRRMLSNR. The segment at 243–257 is leucine-zipper; the sequence is LETQVNDLKGEHSSL. Positions 368 to 390 are enriched in polar residues; it reads PSQTSSPLQRIRNGQNHHVTPSA.

It belongs to the bZIP family. As to quaternary structure, forms a heterodimer with BZIP1, BZIP2, BZIP9, BZIP11, BZIP44, BZIP53 and BZIP63. Interacts with ABI3 and forms a complex made of ABI3, BZIP53 and BZIP10. Binding with LSD1 leads to cytoplasmic retention. In terms of tissue distribution, expressed in roots, shoots, stems, young leaves, trichomes, hydathodes, siliques, seeds, and flowers, mostly in vascular tissues.

Its subcellular location is the nucleus. It is found in the cytoplasm. Functionally, transcription factor that binds to the C-box-like motif (5'-TGCTGACGTCA-3') and G-box-like motif (5'-CCACGTGGCC-3'), ABRE elements, of gene promoters. Binds to the 5'-ACGT-3' motif of seed storage protein (SSP) encoding gene promoters (e.g. At2S and CRU3) and promotes their expression in seeds when in complex with ABI3 and BZIP53. Involved in the defense responses to the biotrophic pathogen Hyaloperonospora parasitica and oxidative stress responses; mediates positively cell death. Promotes BZIP53-mediated response to hypoosmolarity stress that leads to POX1/PRODH1 accumulation. The polypeptide is Basic leucine zipper 10 (BZIP10) (Arabidopsis thaliana (Mouse-ear cress)).